A 37-amino-acid chain; its full sequence is Toxin Bcg III 28.78 (37 aa).

C6 and C31 are disulfide-bonded.

It localises to the secreted. It is found in the nematocyst. The chain is Toxin Bcg III 28.78 from Bunodosoma cangicum (Sea anemone).